The chain runs to 531 residues: NAD(P)H-quinone oxidoreductase chain 4 (531 aa).

A run of 14 helical transmembrane segments spans residues 9 to 29, 41 to 61, 93 to 113, 117 to 137, 141 to 161, 173 to 193, 217 to 237, 248 to 268, 282 to 302, 311 to 331, 337 to 357, 381 to 401, 422 to 442, and 469 to 489; these read FPWL…IPFF, FALS…INGF, MPLI…AWPV, PKLF…VFAV, LLFF…LAIW, FIIY…AMGF, IFCY…VPLH, TAPV…YALL, FAPL…LTSF, IAYS…SFSS, AMLQ…LVGA, FALW…SGFV, VVMA…LLSM, and VYII…PRLV.

Belongs to the complex I subunit 4 family.

It localises to the cellular thylakoid membrane. It carries out the reaction a plastoquinone + NADH + (n+1) H(+)(in) = a plastoquinol + NAD(+) + n H(+)(out). It catalyses the reaction a plastoquinone + NADPH + (n+1) H(+)(in) = a plastoquinol + NADP(+) + n H(+)(out). In terms of biological role, NDH-1 shuttles electrons from NAD(P)H, via FMN and iron-sulfur (Fe-S) centers, to quinones in the respiratory chain. The immediate electron acceptor for the enzyme in this species is believed to be plastoquinone. Couples the redox reaction to proton translocation (for every two electrons transferred, four hydrogen ions are translocated across the cytoplasmic membrane), and thus conserves the redox energy in a proton gradient. This Prochlorococcus marinus (strain MIT 9301) protein is NAD(P)H-quinone oxidoreductase chain 4.